The primary structure comprises 266 residues: Na(+)-translocating NADH-quinone reductase subunit C (266 aa).

The chain crosses the membrane as a helical span at residues 16 to 36 (LLVVVILCLVCSVVVAGAAVG). Threonine 232 carries the FMN phosphoryl threonine modification.

This sequence belongs to the NqrC family. Composed of six subunits; NqrA, NqrB, NqrC, NqrD, NqrE and NqrF. It depends on FMN as a cofactor.

The protein localises to the cell inner membrane. The catalysed reaction is a ubiquinone + n Na(+)(in) + NADH + H(+) = a ubiquinol + n Na(+)(out) + NAD(+). NQR complex catalyzes the reduction of ubiquinone-1 to ubiquinol by two successive reactions, coupled with the transport of Na(+) ions from the cytoplasm to the periplasm. NqrA to NqrE are probably involved in the second step, the conversion of ubisemiquinone to ubiquinol. The polypeptide is Na(+)-translocating NADH-quinone reductase subunit C (Yersinia pestis).